The following is a 327-amino-acid chain: Glycerol-3-phosphate dehydrogenase [NAD(P)+] (327 aa).

3 residues coordinate NADPH: Trp-16, Arg-36, and Lys-108. Residues Lys-108, Gly-136, and Ser-138 each coordinate sn-glycerol 3-phosphate. Residue Ala-140 coordinates NADPH. 5 residues coordinate sn-glycerol 3-phosphate: Lys-191, Asp-244, Ser-254, Arg-255, and Asn-256. Lys-191 (proton acceptor) is an active-site residue. Arg-255 contacts NADPH. Residues Leu-274 and Glu-276 each contribute to the NADPH site.

This sequence belongs to the NAD-dependent glycerol-3-phosphate dehydrogenase family.

The protein localises to the cytoplasm. It carries out the reaction sn-glycerol 3-phosphate + NAD(+) = dihydroxyacetone phosphate + NADH + H(+). It catalyses the reaction sn-glycerol 3-phosphate + NADP(+) = dihydroxyacetone phosphate + NADPH + H(+). The protein operates within membrane lipid metabolism; glycerophospholipid metabolism. Its function is as follows. Catalyzes the reduction of the glycolytic intermediate dihydroxyacetone phosphate (DHAP) to sn-glycerol 3-phosphate (G3P), the key precursor for phospholipid synthesis. The sequence is that of Glycerol-3-phosphate dehydrogenase [NAD(P)+] from Bradyrhizobium sp. (strain ORS 278).